The sequence spans 231 residues: Large ribosomal subunit protein uL1 (231 aa).

Belongs to the universal ribosomal protein uL1 family. Part of the 50S ribosomal subunit.

Binds directly to 23S rRNA. The L1 stalk is quite mobile in the ribosome, and is involved in E site tRNA release. Functionally, protein L1 is also a translational repressor protein, it controls the translation of the L11 operon by binding to its mRNA. This is Large ribosomal subunit protein uL1 from Pseudomonas syringae pv. tomato (strain ATCC BAA-871 / DC3000).